The following is a 471-amino-acid chain: Glutamate--tRNA ligase (471 aa).

A 'HIGH' region motif is present at residues 9-19; that stretch reads PSPTGFLHVGG. 4 residues coordinate Zn(2+): Cys98, Cys100, Cys125, and Asp127. Positions 237–241 match the 'KMSKS' region motif; that stretch reads KLSKR. Lys240 serves as a coordination point for ATP.

This sequence belongs to the class-I aminoacyl-tRNA synthetase family. Glutamate--tRNA ligase type 1 subfamily. Monomer. The cofactor is Zn(2+).

It is found in the cytoplasm. It carries out the reaction tRNA(Glu) + L-glutamate + ATP = L-glutamyl-tRNA(Glu) + AMP + diphosphate. Functionally, catalyzes the attachment of glutamate to tRNA(Glu) in a two-step reaction: glutamate is first activated by ATP to form Glu-AMP and then transferred to the acceptor end of tRNA(Glu). The sequence is that of Glutamate--tRNA ligase from Aeromonas salmonicida (strain A449).